A 273-amino-acid polypeptide reads, in one-letter code: MDFLIVLKALMMGLVEGFTEFLPISSTGHLIVFGNLIGFHSNHKVFEIAIQLGAVLAVVFEYRQRFSNVLHGVGKDRKANRFVLNLAIAFIPAAVMGLLFDKQIKEYLFNPLSVAVMLVLGGFFILWVEKRQSRAEPKIADVDALRPIDALMIGVAQVFALVPGTSRSGSTVMGGMFWGIERKTATEFSFFLAVPMMVAATAYDVLKHYRFFTLHDVGLILIGFIAAFVSGLVAVKALLKFVSKKNYIPFAYYRIVFGIVIIILWLSGWISWE.

Transmembrane regions (helical) follow at residues G13–N35, V45–Y62, F82–K102, L108–V128, T186–L206, L219–L239, and F250–I270.

Belongs to the UppP family.

It localises to the cell inner membrane. The enzyme catalyses di-trans,octa-cis-undecaprenyl diphosphate + H2O = di-trans,octa-cis-undecaprenyl phosphate + phosphate + H(+). Functionally, catalyzes the dephosphorylation of undecaprenyl diphosphate (UPP). Confers resistance to bacitracin. The sequence is that of Undecaprenyl-diphosphatase from Neisseria gonorrhoeae (strain NCCP11945).